The sequence spans 427 residues: Glutamate-1-semialdehyde 2,1-aminomutase (427 aa).

Lys-268 carries the post-translational modification N6-(pyridoxal phosphate)lysine.

It belongs to the class-III pyridoxal-phosphate-dependent aminotransferase family. HemL subfamily. Requires pyridoxal 5'-phosphate as cofactor.

It is found in the cytoplasm. It catalyses the reaction (S)-4-amino-5-oxopentanoate = 5-aminolevulinate. Its pathway is porphyrin-containing compound metabolism; protoporphyrin-IX biosynthesis; 5-aminolevulinate from L-glutamyl-tRNA(Glu): step 2/2. The protein is Glutamate-1-semialdehyde 2,1-aminomutase of Methanococcus maripaludis (strain DSM 14266 / JCM 13030 / NBRC 101832 / S2 / LL).